A 454-amino-acid polypeptide reads, in one-letter code: MSYGYPGQGYGPGGGHHQPPPPQWDGQQQHHHQGGYGYSNPGQGQYNPQPPQDQGYGGYHQQPPQQYQQGSYNQGQYPPQGGYGGPYGQQQQHHQQGHSQRPPGPPPDGYDIYGYPIGSGHQTRNQGSHEIHEIPSGTQQFGHGAPEGYGFQYSNCSGRRKALLIGINYLGQDAELHGCINDTKNVSAFLVENYGYKREDMVILTDDATNPLLQPTKENILRAMQWLVAGAQPNDALFLHYSGHGGQTKDTDGDEDDGYDEVIYPVDFKTAGHIVDDQIHDTVVKPLQPGVRLTAIFDSCHSGSVLDLPYIYSTKGVIKEPNLAKEAGQGLLAAVGSYARGDIGGMASSLFSVAKTAFGGGNEAYERTKRTKTSPADVIMWSGSKDDQTSADATIASQATGAMSWAFITAIKANPKQSYVQLLNSIRDVLETKYTQKPQLSSSHPIDVDMLFVM.

A compositionally biased stretch (gly residues) spans 1–16 (MSYGYPGQGYGPGGGH). The segment at 1–129 (MSYGYPGQGY…GHQTRNQGSH (129 aa)) is disordered. 4 stretches are compositionally biased toward low complexity: residues 38 to 47 (YSNPGQGQYN), 59 to 80 (YHQQ…YPPQ), 88 to 101 (GQQQ…HSQR), and 109 to 120 (GYDIYGYPIGSG). Catalysis depends on residues histidine 244 and cysteine 300.

The protein belongs to the peptidase C14B family.

Involved in cell death (apoptosis). This Neurospora crassa (strain ATCC 24698 / 74-OR23-1A / CBS 708.71 / DSM 1257 / FGSC 987) protein is Metacaspase-1A (casA).